We begin with the raw amino-acid sequence, 303 residues long: Protoheme IX farnesyltransferase 2 (303 aa).

9 helical membrane passes run 29–49 (VVAL…PGIV), 51–71 (LQPL…AAAF), 96–118 (ISTT…VLYT), 123–143 (LTAW…TAYL), 150–170 (NIVI…TAIT), 177–197 (ALLL…ALAI), 223–243 (CILL…LVGM), 244–264 (CGPI…YKAW), and 281–301 (FSIY…YFWV).

This sequence belongs to the UbiA prenyltransferase family. Protoheme IX farnesyltransferase subfamily.

The protein resides in the cell inner membrane. The enzyme catalyses heme b + (2E,6E)-farnesyl diphosphate + H2O = Fe(II)-heme o + diphosphate. Its pathway is porphyrin-containing compound metabolism; heme O biosynthesis; heme O from protoheme: step 1/1. Functionally, converts heme B (protoheme IX) to heme O by substitution of the vinyl group on carbon 2 of heme B porphyrin ring with a hydroxyethyl farnesyl side group. In Shewanella frigidimarina (strain NCIMB 400), this protein is Protoheme IX farnesyltransferase 2.